A 182-amino-acid polypeptide reads, in one-letter code: Crossover junction endodeoxyribonuclease RuvC (182 aa).

Active-site residues include D7, E69, and D141. Residues D7, E69, and D141 each contribute to the Mg(2+) site.

This sequence belongs to the RuvC family. In terms of assembly, homodimer which binds Holliday junction (HJ) DNA. The HJ becomes 2-fold symmetrical on binding to RuvC with unstacked arms; it has a different conformation from HJ DNA in complex with RuvA. In the full resolvosome a probable DNA-RuvA(4)-RuvB(12)-RuvC(2) complex forms which resolves the HJ. Mg(2+) serves as cofactor.

Its subcellular location is the cytoplasm. The enzyme catalyses Endonucleolytic cleavage at a junction such as a reciprocal single-stranded crossover between two homologous DNA duplexes (Holliday junction).. The RuvA-RuvB-RuvC complex processes Holliday junction (HJ) DNA during genetic recombination and DNA repair. Endonuclease that resolves HJ intermediates. Cleaves cruciform DNA by making single-stranded nicks across the HJ at symmetrical positions within the homologous arms, yielding a 5'-phosphate and a 3'-hydroxyl group; requires a central core of homology in the junction. The consensus cleavage sequence is 5'-(A/T)TT(C/G)-3'. Cleavage occurs on the 3'-side of the TT dinucleotide at the point of strand exchange. HJ branch migration catalyzed by RuvA-RuvB allows RuvC to scan DNA until it finds its consensus sequence, where it cleaves and resolves the cruciform DNA. In Polaromonas sp. (strain JS666 / ATCC BAA-500), this protein is Crossover junction endodeoxyribonuclease RuvC.